The primary structure comprises 1370 residues: DNA-directed RNA polymerase subunit beta (1370 aa).

It belongs to the RNA polymerase beta chain family. In terms of assembly, the RNAP catalytic core consists of 2 alpha, 1 beta, 1 beta' and 1 omega subunit. When a sigma factor is associated with the core the holoenzyme is formed, which can initiate transcription.

It carries out the reaction RNA(n) + a ribonucleoside 5'-triphosphate = RNA(n+1) + diphosphate. Functionally, DNA-dependent RNA polymerase catalyzes the transcription of DNA into RNA using the four ribonucleoside triphosphates as substrates. This chain is DNA-directed RNA polymerase subunit beta, found in Bordetella avium (strain 197N).